We begin with the raw amino-acid sequence, 756 residues long: Multicystatin (756 aa).

Cystatin domains are found at residues I3–T96, M97–A191, K192–A285, K286–K380, K381–A474, K475–A568, I569–A662, and K663–K756. Short sequence motifs (secondary area of contact) lie at residues Q48 to G52, Q142 to G146, Q237 to G241, Q331 to G335, Q426 to G430, Q520 to G524, Q614 to G618, and Q708 to G712.

The protein belongs to the cystatin family. Phytocystatin subfamily. As to expression, expressed abundantly in tuber and leaf.

In terms of biological role, probably has a role in the plant's defense system. The sequence is that of Multicystatin from Solanum tuberosum (Potato).